The chain runs to 267 residues: MRQKTISNKNKQTKNTNNISLRRKLGLMYKKAILVLKIVLMIFVCLFVFTKYFTSIKTYLITNIYQVTTKLGFRLENVIIEGQQNVDELTILKVLNANKSSPIFSLKLDEISNNLKKSKWIKEVYVSRRLPNTVYIKLFEREPIAIWQINNQLFLIDEEGYKISKDIQPFSHLLHVVGEGANIYASKLVLELQKYPALLNKTLVAIRVGDRRWDLNLKGNISIKLPEKEFETALKYIDALNKTNKLFNQNYKALDLRDRNKYYIQKY.

Topologically, residues 1 to 32 are cytoplasmic; that stretch reads MRQKTISNKNKQTKNTNNISLRRKLGLMYKKA. The chain crosses the membrane as a helical span at residues 33–53; it reads ILVLKIVLMIFVCLFVFTKYF. The Periplasmic segment spans residues 54–267; sequence TSIKTYLITN…DRNKYYIQKY (214 aa). A POTRA domain is found at 73-141; sequence FRLENVIIEG…NTVYIKLFER (69 aa).

Belongs to the FtsQ/DivIB family. FtsQ subfamily.

The protein localises to the cell inner membrane. Its function is as follows. Essential cell division protein. The polypeptide is Cell division protein FtsQ (Rickettsia prowazekii (strain Madrid E)).